A 394-amino-acid polypeptide reads, in one-letter code: 8-amino-7-oxononanoate synthase (394 aa).

A substrate-binding site is contributed by R21. A pyridoxal 5'-phosphate-binding site is contributed by 112–113 (GY). H137 serves as a coordination point for substrate. Residues S183, H211, and T239 each contribute to the pyridoxal 5'-phosphate site. K242 carries the N6-(pyridoxal phosphate)lysine modification. T358 serves as a coordination point for substrate.

This sequence belongs to the class-II pyridoxal-phosphate-dependent aminotransferase family. BioF subfamily. Homodimer. It depends on pyridoxal 5'-phosphate as a cofactor.

It carries out the reaction 6-carboxyhexanoyl-[ACP] + L-alanine + H(+) = (8S)-8-amino-7-oxononanoate + holo-[ACP] + CO2. It functions in the pathway cofactor biosynthesis; biotin biosynthesis. Catalyzes the decarboxylative condensation of pimeloyl-[acyl-carrier protein] and L-alanine to produce 8-amino-7-oxononanoate (AON), [acyl-carrier protein], and carbon dioxide. The chain is 8-amino-7-oxononanoate synthase from Burkholderia pseudomallei (strain K96243).